Here is a 229-residue protein sequence, read N- to C-terminus: MANPSQFGFQDASSPIMEELVEFHDHALMVALAICSLVLYLLALMLVEKLSSNTVDAQEVELIWTILPAIVLILLALPSLQILYMMDEIDEPDLTLKAIGHQWYWSYEYTDFKDLTFDSYMIPTSELPPGHFRLLEVDHRVVVPMESPIRVIITAGDVLHSWAVPTLGVKTDAIPGRLNQTSFITTRPGIFYGQCSEICGANHSYMPIVVESTPLTYFESWSSLLSTDS.

The Mitochondrial intermembrane segment spans residues 1-14 (MANPSQFGFQDASS). The helical transmembrane segment at 15-45 (PIMEELVEFHDHALMVALAICSLVLYLLALM) threads the bilayer. Over 46–58 (LVEKLSSNTVDAQ) the chain is Mitochondrial matrix. Residues 59–86 (EVELIWTILPAIVLILLALPSLQILYMM) form a helical membrane-spanning segment. The Mitochondrial intermembrane portion of the chain corresponds to 87–229 (DEIDEPDLTL…SWSSLLSTDS (143 aa)). Positions 160, 195, 197, 199, 203, and 206 each coordinate Cu cation. Residue Glu-197 participates in Mg(2+) binding.

The protein belongs to the cytochrome c oxidase subunit 2 family. As to quaternary structure, component of the cytochrome c oxidase (complex IV, CIV), a multisubunit enzyme composed of 14 subunits. The complex is composed of a catalytic core of 3 subunits MT-CO1, MT-CO2 and MT-CO3, encoded in the mitochondrial DNA, and 11 supernumerary subunits COX4I, COX5A, COX5B, COX6A, COX6B, COX6C, COX7A, COX7B, COX7C, COX8 and NDUFA4, which are encoded in the nuclear genome. The complex exists as a monomer or a dimer and forms supercomplexes (SCs) in the inner mitochondrial membrane with NADH-ubiquinone oxidoreductase (complex I, CI) and ubiquinol-cytochrome c oxidoreductase (cytochrome b-c1 complex, complex III, CIII), resulting in different assemblies (supercomplex SCI(1)III(2)IV(1) and megacomplex MCI(2)III(2)IV(2)). Found in a complex with TMEM177, COA6, COX18, COX20, SCO1 and SCO2. Interacts with TMEM177 in a COX20-dependent manner. Interacts with COX20. Interacts with COX16. The cofactor is Cu cation.

It localises to the mitochondrion inner membrane. The catalysed reaction is 4 Fe(II)-[cytochrome c] + O2 + 8 H(+)(in) = 4 Fe(III)-[cytochrome c] + 2 H2O + 4 H(+)(out). Its function is as follows. Component of the cytochrome c oxidase, the last enzyme in the mitochondrial electron transport chain which drives oxidative phosphorylation. The respiratory chain contains 3 multisubunit complexes succinate dehydrogenase (complex II, CII), ubiquinol-cytochrome c oxidoreductase (cytochrome b-c1 complex, complex III, CIII) and cytochrome c oxidase (complex IV, CIV), that cooperate to transfer electrons derived from NADH and succinate to molecular oxygen, creating an electrochemical gradient over the inner membrane that drives transmembrane transport and the ATP synthase. Cytochrome c oxidase is the component of the respiratory chain that catalyzes the reduction of oxygen to water. Electrons originating from reduced cytochrome c in the intermembrane space (IMS) are transferred via the dinuclear copper A center (CU(A)) of subunit 2 and heme A of subunit 1 to the active site in subunit 1, a binuclear center (BNC) formed by heme A3 and copper B (CU(B)). The BNC reduces molecular oxygen to 2 water molecules using 4 electrons from cytochrome c in the IMS and 4 protons from the mitochondrial matrix. The chain is Cytochrome c oxidase subunit 2 (MT-CO2) from Struthio camelus (Common ostrich).